The following is a 351-amino-acid chain: uncharacterized protein (351 aa).

The signal sequence occupies residues 1 to 27; it reads MKNKKRVLIASSLSCAILLLSAATTQA. The interval 29–71 is disordered; that stretch reads SAHKDSQDQNKKEHVDKSQQKDKRNVTNKDKNSTVPDDIGKNG. Residues 30–60 show a composition bias toward basic and acidic residues; that stretch reads AHKDSQDQNKKEHVDKSQQKDKRNVTNKDKN.

Belongs to the aerolysin family.

This is an uncharacterized protein from Staphylococcus aureus (strain Mu50 / ATCC 700699).